A 305-amino-acid polypeptide reads, in one-letter code: Elongation factor Ts, mitochondrial (305 aa).

This sequence belongs to the EF-Ts family.

The protein localises to the mitochondrion. Its function is as follows. Associates with the EF-Tu.GDP complex and induces the exchange of GDP to GTP. It remains bound to the aminoacyl-tRNA.EF-Tu.GTP complex up to the GTP hydrolysis stage on the ribosome. The polypeptide is Elongation factor Ts, mitochondrial (tsfm) (Danio rerio (Zebrafish)).